The primary structure comprises 116 residues: Putative antiporter subunit mnhC2 (116 aa).

3 helical membrane passes run 3–23, 28–48, and 72–92; these read LILL…ILSL, IVIG…SMGH, and AIVL…LVLV.

Belongs to the CPA3 antiporters (TC 2.A.63) subunit C family. As to quaternary structure, may form a heterooligomeric complex that consists of seven subunits: mnhA2, mnhB2, mnhC2, mnhD2, mnhE2, mnhF2 and mnhG2.

The protein resides in the cell membrane. This is Putative antiporter subunit mnhC2 (mnhC2) from Staphylococcus haemolyticus (strain JCSC1435).